The primary structure comprises 104 residues: Replication restart protein PriB (104 aa).

The SSB domain occupies 1–101; sequence MTNRLELSGV…LHADHIEIIC (101 aa).

This sequence belongs to the PriB family. Homodimer. Interacts with PriA and DnaT. Component of the replication restart primosome. Primosome assembly occurs via a 'hand-off' mechanism. PriA binds to replication forks, subsequently PriB then DnaT bind; DnaT then displaces ssDNA to generate the helicase loading substrate.

Functionally, involved in the restart of stalled replication forks, which reloads the replicative helicase on sites other than the origin of replication; the PriA-PriB pathway is the major replication restart pathway. During primosome assembly it facilitates complex formation between PriA and DnaT on DNA; stabilizes PriA on DNA. Stimulates the DNA unwinding activity of PriA helicase. This Photobacterium profundum (strain SS9) protein is Replication restart protein PriB.